Consider the following 100-residue polypeptide: Urease subunit gamma (100 aa).

Belongs to the urease gamma subunit family. As to quaternary structure, heterotrimer of UreA (gamma), UreB (beta) and UreC (alpha) subunits. Three heterotrimers associate to form the active enzyme.

It localises to the cytoplasm. It catalyses the reaction urea + 2 H2O + H(+) = hydrogencarbonate + 2 NH4(+). It participates in nitrogen metabolism; urea degradation; CO(2) and NH(3) from urea (urease route): step 1/1. This chain is Urease subunit gamma, found in Rhizobium leguminosarum bv. viciae.